We begin with the raw amino-acid sequence, 302 residues long: Mitochondrial adapter protein MCP1 (302 aa).

Residues 1–35 (MIKLHEVPPEPVDPASLPHDVNAHSPEGDGNPDKR) are disordered. The Cytoplasmic portion of the chain corresponds to 1–61 (MIKLHEVPPE…RFLWNCQKIS (61 aa)). The PxP motif lies at 4 to 12 (LHEVPPEPV). A helical membrane pass occupies residues 62–82 (VLPMALYFPLHAANTLITPAV). Residues 83-100 (SPDSAPDDVLMMVREILP) lie on the Mitochondrial intermembrane side of the membrane. A helical transmembrane segment spans residues 101 to 121 (SITTKLLVAGITLHVSAGVLL). Residues 122 to 173 (RIVNNWNKPRRNRHRHLKISAEQDLSQDSIGLTGGISGYLFGLYKTFRIPPQ) are Cytoplasmic-facing. A helical membrane pass occupies residues 174–194 (VISGYILVPVLIYHLLIMKWV). The Mitochondrial intermembrane segment spans residues 195–219 (PNSISTEVDFASIKQLLSSKNRWWK). Residues 220–240 (WLGGLVPLAILLESGVYHIGS) traverse the membrane as a helical segment. Residues 241–258 (GLCRYFGVRKMTSRKKWS) lie on the Cytoplasmic side of the membrane. Residues 259–276 (TAINLLTLVGFVSLIRLM) traverse the membrane as a helical segment. The Mitochondrial intermembrane portion of the chain corresponds to 277–302 (KEDSTKLGPNQFESIFKKIRLLLHVN).

Interacts (via PxP motif) with VPS13 (via SHR-BD domain).

It is found in the mitochondrion outer membrane. Functionally, recruits the lipid transfer protein Vps13 to mitochondria thereby promoting vacuole-mitochondria contacts. Involved in mitochondrial lipid homeostasis. This chain is Mitochondrial adapter protein MCP1, found in Saccharomyces cerevisiae (strain ATCC 204508 / S288c) (Baker's yeast).